The chain runs to 647 residues: Pre-mRNA-splicing factor SLU7 (647 aa).

Polar residues predominate over residues 1–19 (MASYKQNLPPSALIKQQVN). The segment at 1–44 (MASYKQNLPPSALIKQQVNVADKKSKAEVQRDRQLEEDRKAGTA) is disordered. Basic and acidic residues predominate over residues 21–41 (ADKKSKAEVQRDRQLEEDRKA). A CCHC-type zinc finger spans residues 113–130 (GACENCGAMGHQKRDCFD). Disordered stretches follow at residues 193–212 (HEMK…APKD) and 465–620 (EVKE…KEME). Basic and acidic residues predominate over residues 465–479 (EVKEEKEKEDSIKDE). Residues 480–491 (VAEENSDNDNDE) show a composition bias toward acidic residues. The segment covering 513–533 (EKEREKERLIEKERRERDQRR) has biased composition (basic and acidic residues). The span at 534-555 (RDKKREKRERKKAKLGKRKRRH) shows a compositional bias: basic residues. Residues 588–606 (EKAEGMKAAREGDRGRKYN) show a composition bias toward basic and acidic residues.

The protein belongs to the SLU7 family.

The protein localises to the nucleus. Participates in the second catalytic step of pre-mRNA splicing, when the free hydroxyl group of exon I attacks the 3'-splice site to generate spliced mRNA and the excised lariat intron. This chain is Pre-mRNA-splicing factor SLU7, found in Caenorhabditis elegans.